Consider the following 436-residue polypeptide: Proline--tRNA ligase (436 aa).

It belongs to the class-II aminoacyl-tRNA synthetase family. ProS type 2 subfamily. In terms of assembly, homodimer.

It is found in the cytoplasm. The catalysed reaction is tRNA(Pro) + L-proline + ATP = L-prolyl-tRNA(Pro) + AMP + diphosphate. Functionally, catalyzes the attachment of proline to tRNA(Pro) in a two-step reaction: proline is first activated by ATP to form Pro-AMP and then transferred to the acceptor end of tRNA(Pro). This Neorickettsia sennetsu (strain ATCC VR-367 / Miyayama) (Ehrlichia sennetsu) protein is Proline--tRNA ligase.